The sequence spans 449 residues: Probable mitochondrial chaperone bcs1 (449 aa).

Topologically, residues 1–20 are mitochondrial intermembrane; it reads MDNIGAADAATSSGISGLLS. The helical transmembrane segment at 21–41 threads the bilayer; the sequence is GNSFLGAGIGLMGFGAGLAIL. Over 42 to 449 the chain is Mitochondrial matrix; it reads RRGLISGASL…FNVHRKSLSV (408 aa). Residue 249 to 256 participates in ATP binding; it reads GPPGSGKT.

The protein belongs to the AAA ATPase family. BCS1 subfamily.

It is found in the mitochondrion inner membrane. It catalyses the reaction ATP + H2O = ADP + phosphate + H(+). Chaperone necessary for the incorporation of Rieske iron-sulfur protein rip1 into the mitochondrial respiratory chain complex III. The sequence is that of Probable mitochondrial chaperone bcs1 from Schizosaccharomyces pombe (strain 972 / ATCC 24843) (Fission yeast).